We begin with the raw amino-acid sequence, 822 residues long: Cadherin-3 (822 aa).

The N-terminal stretch at 1 to 25 (MELLSGPHAFLLLLLQVCWLRSVVS) is a signal peptide. The propeptide occupies 26 to 99 (EPYRAGFIGE…PTRILRRRKR (74 aa)). Cadherin domains lie at 100–207 (EWVM…KPKF), 208–320 (TQDT…APEF), 321–432 (EPQK…APVF), 433–538 (VPPS…DHGP), and 539–645 (IPEP…RPWK). Residues 100–647 (EWVMPPIFVP…NDCPRPWKGG (548 aa)) lie on the Extracellular side of the membrane. N-linked (GlcNAc...) asparagine glycosylation is present at Asn192. The N-linked (GlcNAc...) asparagine glycan is linked to Asn558. Residues 648 to 670 (FILPILGAVLALLTLLLALLLLV) traverse the membrane as a helical segment. Over 671-822 (RKKRKVKEPL…ADMYGGGEDD (152 aa)) the chain is Cytoplasmic.

As to quaternary structure, interacts with CDCP1 and CTNNB1.

It is found in the cell membrane. In terms of biological role, cadherins are calcium-dependent cell adhesion proteins. They preferentially interact with themselves in a homophilic manner in connecting cells; cadherins may thus contribute to the sorting of heterogeneous cell types. The chain is Cadherin-3 (Cdh3) from Mus musculus (Mouse).